We begin with the raw amino-acid sequence, 110 residues long: Phosphoribosyl-ATP pyrophosphatase (110 aa).

The protein belongs to the PRA-PH family.

It localises to the cytoplasm. The enzyme catalyses 1-(5-phospho-beta-D-ribosyl)-ATP + H2O = 1-(5-phospho-beta-D-ribosyl)-5'-AMP + diphosphate + H(+). Its pathway is amino-acid biosynthesis; L-histidine biosynthesis; L-histidine from 5-phospho-alpha-D-ribose 1-diphosphate: step 2/9. The protein is Phosphoribosyl-ATP pyrophosphatase of Pseudomonas fluorescens (strain SBW25).